The sequence spans 343 residues: MPLDDRKKKILYAVITDYIMTAEPIGSRTIAKKYNIGLSSATIRNEMADLEEMGYLEQPHTSAGRIPSDKGYRFYVDSILRNYINNEPPISYNTREEIIAEFDEIVKKYAKILANITHHTTVAKMPKLNPDRIKRIQLIPVASNKMIFLVVTDTGIVKNYLLNLCQNVDRTIFEFLNNLLNEKIAGKNEKDVFEFLQQDLRHMLGEMVFIADELINTILLSLKQLQETDIYADGTSHILDFPEYKDLSKAKNFFNLLDNKSLLNEILEPEVDFIDVRIGSENKFEEMKDLSVIKTTYKINGRVVGTIGIIGPTRMDYRKLINEINVMTKELSNLLSNIYNDEI.

It belongs to the HrcA family.

Negative regulator of class I heat shock genes (grpE-dnaK-dnaJ and groELS operons). Prevents heat-shock induction of these operons. This chain is Heat-inducible transcription repressor HrcA, found in Thermoanaerobacter sp. (strain X514).